The chain runs to 931 residues: GPI ethanolamine phosphate transferase 1 (931 aa).

A topological domain (cytoplasmic) is located at residue methionine 1. A helical membrane pass occupies residues 2–22; that stretch reads LLFFALGLLIHFVFFASIFDI. Over 23 to 442 the chain is Lumenal; the sequence is YFTSPLVHGM…SYYHTYDRLF (420 aa). 4 N-linked (GlcNAc...) asparagine glycosylation sites follow: asparagine 128, asparagine 192, asparagine 295, and asparagine 350. Residues 443–463 form a helical membrane-spanning segment; it reads LGINVAVGFVGWMSYTSLLII. Topologically, residues 464 to 480 are cytoplasmic; it reads KSHSNIPKGTRKEGKKP. Residues 481–501 traverse the membrane as a helical segment; it reads HCLLLYSFIATGVLVACFLMI. Residue glutamine 502 is a topological domain, lumenal. A helical transmembrane segment spans residues 503-523; that stretch reads ACPWTYYVYCLLPVPIWYAVL. At 524 to 543 the chain is on the cytoplasmic side; the sequence is REHEVIQDLVESLLTFPRSH. Residues 544 to 564 traverse the membrane as a helical segment; sequence FVAYLLVFTLGIEVLVLSFFY. Position 565 (arginine 565) is a topological domain, lumenal. Residues 566–586 form a helical membrane-spanning segment; sequence YMLTAGLIVFAGWPFLTQLWT. Residues 587–591 lie on the Cytoplasmic side of the membrane; sequence RAKIT. Residues 592–612 form a helical membrane-spanning segment; sequence FLSWAFFSLLLAVFPLMPVVG. At 613–618 the chain is on the lumenal side; sequence RKPNLS. The N-linked (GlcNAc...) asparagine glycan is linked to asparagine 616. Residues 619-639 form a helical membrane-spanning segment; it reads LVMGAGFLVLLLSLAVVTTLG. The Cytoplasmic portion of the chain corresponds to 640 to 649; it reads KRNIKLVKGE. The helical transmembrane segment at 650 to 670 threads the bilayer; the sequence is LLVLLLQMLSTVLSMYVVYST. The Lumenal portion of the chain corresponds to 671–685; it reads HHSLLKKEGLPLMNQ. A helical transmembrane segment spans residues 686–706; it reads IVSWATLASSLVAPLLSSTAL. The Cytoplasmic segment spans residues 707–723; sequence SQRLASILLSLMSTYLL. Residues 724 to 744 traverse the membrane as a helical segment; that stretch reads LSTGYEALFPLVLSCLMFVWI. Over 745 to 786 the chain is Lumenal; it reads QVEQETLQQPGVSCKQKLTSIQFTCDTDIAQFRQLCPDDIRR. A helical transmembrane segment spans residues 787-807; that stretch reads AFFLVFFLLTAFFGTGNIASI. At 808–824 the chain is on the cytoplasmic side; that stretch reads NSFDLASVYCFLTVFSP. Residues 825 to 845 traverse the membrane as a helical segment; that stretch reads FMMGALMMWKILIPFVLVMCA. The Lumenal segment spans residues 846 to 858; sequence FEAVQITTQLSSK. Residues 859 to 879 traverse the membrane as a helical segment; sequence GLFLVVLIISDIMALHFFFLV. Over 880–894 the chain is Cytoplasmic; it reads KDSGSWLDIGTSISH. The chain crosses the membrane as a helical span at residues 895–915; it reads YVIVMSMTIFLVFLNGLAQLL. At 916–931 the chain is on the lumenal side; the sequence is TTKKLQLCGKPKSHLM.

The protein belongs to the PIGG/PIGN/PIGO family. PIGN subfamily.

The protein localises to the endoplasmic reticulum membrane. It functions in the pathway glycolipid biosynthesis; glycosylphosphatidylinositol-anchor biosynthesis. Its function is as follows. Ethanolamine phosphate transferase that catalyzes an ethanolamine phosphate (EtNP) transfer from phosphatidylethanolamine (PE) to the 2-OH position of the first alpha-1,4-linked mannose of the alpha-D-Man-(1-&gt;6)-alpha-D-Man-(1-&gt;4)-alpha-D-GlcN-(1-&gt;6)-(1-radyl,2-acyl-sn-glycero-3-phospho)-2-acyl-inositol (also termed H3) intermediate to generate an alpha-D-Man-(1-&gt;6)-2-PEtn-alpha-D-Man-(1-&gt;4)-alpha-D-GlcN-(1-&gt;6)-(1-radyl,2-acyl-sn-glycero-3-phospho)-2-acyl-inositol and participates in the eighth step of the glycosylphosphatidylinositol-anchor biosynthesis. May act as suppressor of replication stress and chromosome missegregation. The polypeptide is GPI ethanolamine phosphate transferase 1 (Mus musculus (Mouse)).